The chain runs to 412 residues: G-protein coupled receptor homolog UL33 (412 aa).

At 1–35 the chain is on the virion surface side; sequence MDTIIHNTTNRSTDTPHVNITCNITEPLSAIRTTE. N-linked (GlcNAc...) asparagine; by host glycans are attached at residues asparagine 7, asparagine 19, and asparagine 23. Residues 36 to 56 form a helical membrane-spanning segment; it reads AVINTFIIFVGGPLNAIVLIT. At 57–80 the chain is on the intravirion side; that stretch reads QLLTNRVLGYSTPTIYMTNLYSTN. Residues 81–101 form a helical membrane-spanning segment; the sequence is FLTLTVLPFIVLSNQWLLPAS. The Virion surface portion of the chain corresponds to 102–106; it reads VASCK. A disulfide bridge links cysteine 105 with cysteine 188. The helical transmembrane segment at 107–127 threads the bilayer; the sequence is FLSVIYYSSCTVGFATVALIA. Residues 128-147 are Intravirion-facing; sequence ADRYRVLHKRTYARQSYRST. The helical transmembrane segment at 148–168 threads the bilayer; that stretch reads YIILLLTWFAGLIFSMPAAVY. The Virion surface segment spans residues 169-206; it reads TTVVIHNGTNGQSSNGHATCVLYFIADEVYTVLLSWKV. Residues 207 to 227 traverse the membrane as a helical segment; it reads LLTLVWGAAPVIMMTWFYAFF. The Intravirion segment spans residues 228 to 244; that stretch reads YSTVQRASQKQRSRTLT. Residues 245 to 265 traverse the membrane as a helical segment; that stretch reads FVSVLLISFVALQTPYVSIMI. Topologically, residues 266–292 are virion surface; sequence FNSYATAAWPMDCEHLTLRRTIGTLSR. Residues 293–313 form a helical membrane-spanning segment; the sequence is LVPHLHCLINPILYALLGHDF. Residues 314-412 lie on the Intravirion side of the membrane; sequence LQRMRQCFRG…SQSHHNLSGV (99 aa). The segment at 377 to 412 is disordered; sequence NFPSGTWKGGQKTASNDTSTKIPHRLSQSHHNLSGV. The span at 388 to 397 shows a compositional bias: polar residues; it reads KTASNDTSTK.

This sequence belongs to the G-protein coupled receptor 1 family. As to quaternary structure, heterodimerizes with US28.

It localises to the virion. The protein resides in the host cell membrane. Its subcellular location is the host cytoplasm. Its function is as follows. G-protein-coupled receptor (vGPCR) that constitutively activates multiple oncogenic signaling pathways including STAT3, AP-1, phospholipase C, NF-kappa-B or cAMP-responsive element (CRE) pathways. Plays an important role in viral reactivation from latency through activation of host CREB1, facilitating its recruitment to the viral major immediate early (MIE) genes. In turn, expression of the MIE-driven genes such as UL123 are de-repressed. Also facilitates virus dissemination via the extracellular and cell-to-cell route. The protein is G-protein coupled receptor homolog UL33 (UL33) of Human cytomegalovirus (strain Merlin) (HHV-5).